The sequence spans 105 residues: Met repressor (105 aa).

Belongs to the MetJ family. Homodimer.

The protein resides in the cytoplasm. Its function is as follows. This regulatory protein, when combined with SAM (S-adenosylmethionine) represses the expression of the methionine regulon and of enzymes involved in SAM synthesis. This chain is Met repressor, found in Yersinia pestis bv. Antiqua (strain Antiqua).